The sequence spans 115 residues: MKVVAAYLLAVLSGKASPTSADIKTILGSVGAETEDSQIELLLKEVKGKDLAELIAAGREKLASVPSGGGGGVAVASATSGGGGGGGASAAESKKEEKKEEKEESDDDMGFSLFE.

The tract at residues 63–115 (ASVPSGGGGGVAVASATSGGGGGGGASAAESKKEEKKEEKEESDDDMGFSLFE) is disordered. Over residues 92–102 (ESKKEEKKEEK) the composition is skewed to basic and acidic residues. Ser105 carries the post-translational modification Phosphoserine.

The protein belongs to the eukaryotic ribosomal protein P1/P2 family. P1 and P2 exist as dimers at the large ribosomal subunit. Post-translationally, phosphorylated.

In terms of biological role, plays an important role in the elongation step of protein synthesis. The protein is Large ribosomal subunit protein P2y (RPP2B) of Arabidopsis thaliana (Mouse-ear cress).